The sequence spans 301 residues: Enolase-phosphatase E1 (301 aa).

Residues Asp22 and Glu24 each coordinate Mg(2+). Substrate is bound by residues 163-164 and Lys197; that span reads SS. A Mg(2+)-binding site is contributed by Asp222. The tract at residues 273 to 301 is disordered; the sequence is AQAGDTEAKRSASGDGALAAKKAPPTHDF.

It belongs to the HAD-like hydrolase superfamily. MasA/MtnC family. In terms of assembly, monomer. Requires Mg(2+) as cofactor.

Its subcellular location is the cytoplasm. The protein resides in the nucleus. It carries out the reaction 5-methylsulfanyl-2,3-dioxopentyl phosphate + H2O = 1,2-dihydroxy-5-(methylsulfanyl)pent-1-en-3-one + phosphate. The protein operates within amino-acid biosynthesis; L-methionine biosynthesis via salvage pathway; L-methionine from S-methyl-5-thio-alpha-D-ribose 1-phosphate: step 3/6. It participates in amino-acid biosynthesis; L-methionine biosynthesis via salvage pathway; L-methionine from S-methyl-5-thio-alpha-D-ribose 1-phosphate: step 4/6. Functionally, bifunctional enzyme that catalyzes the enolization of 2,3-diketo-5-methylthiopentyl-1-phosphate (DK-MTP-1-P) into the intermediate 2-hydroxy-3-keto-5-methylthiopentenyl-1-phosphate (HK-MTPenyl-1-P), which is then dephosphorylated to form the acireductone 1,2-dihydroxy-3-keto-5-methylthiopentene (DHK-MTPene). This is Enolase-phosphatase E1 from Monosiga brevicollis (Choanoflagellate).